We begin with the raw amino-acid sequence, 348 residues long: MQSITIRRPDDWHLHLRDGAMLEGVIADTSRTFARAIIMPNLVPPVVTSADAKAYRERILKALPDSHRFQPLMTLYLTEHTSPDDVEEGKNSGLITAVKLYPAGATTNSHGGVRDMEKAMPVLERMAKIGLPLCVHGEVTTPEVDIFDREAVFIDTVLDPLRQRLPELKVTMEHVTTSDGVDYIKAARGNLAGSITTHHLIINRNAILVGGIRPHYYCLPVAKRENHRLALRAAAVSGDPRFFLGTDSAPHVDPLKECACGCAGIYTSVNTMSCLAHVFEQEGALERLEAFVSLNGPAWYGLQPNEERITLSRQAEPVVFPARIETGAGPVTVFDPMFPLHWQVVQQA.

2 residues coordinate Zn(2+): H13 and H15. Substrate contacts are provided by residues 15-17 (HLR) and N41. Residues K99, H136, and H174 each contribute to the Zn(2+) site. The residue at position 99 (K99) is an N6-carboxylysine. Residue H136 coordinates substrate. L219 contacts substrate. Residue D247 coordinates Zn(2+). D247 is an active-site residue. Residues H251 and A263 each contribute to the substrate site.

It belongs to the metallo-dependent hydrolases superfamily. DHOase family. Class II DHOase subfamily. Homodimer. Zn(2+) serves as cofactor.

The catalysed reaction is (S)-dihydroorotate + H2O = N-carbamoyl-L-aspartate + H(+). The protein operates within pyrimidine metabolism; UMP biosynthesis via de novo pathway; (S)-dihydroorotate from bicarbonate: step 3/3. Functionally, catalyzes the reversible cyclization of carbamoyl aspartate to dihydroorotate. The polypeptide is Dihydroorotase (Rhizobium johnstonii (strain DSM 114642 / LMG 32736 / 3841) (Rhizobium leguminosarum bv. viciae)).